The sequence spans 465 residues: GTPase Der (465 aa).

EngA-type G domains are found at residues 3–166 (FLVA…LNEY) and 184–358 (IHFS…ACAN). GTP-binding positions include 9 to 16 (GRANVGKS), 56 to 60 (DTGGI), 118 to 121 (NKVD), 190 to 197 (GRPNVGKS), 237 to 241 (DTAGV), and 302 to 305 (NKWD). The KH-like domain occupies 359 to 443 (KKITTADATC…PIVFEFKQSE (85 aa)). Residues 446 to 465 (FADRKNKRSKDEGSKSKKVK) are disordered.

This sequence belongs to the TRAFAC class TrmE-Era-EngA-EngB-Septin-like GTPase superfamily. EngA (Der) GTPase family. Associates with the 50S ribosomal subunit.

Its function is as follows. GTPase that plays an essential role in the late steps of ribosome biogenesis. The polypeptide is GTPase Der (Francisella tularensis subsp. mediasiatica (strain FSC147)).